Here is a 68-residue protein sequence, read N- to C-terminus: Alpha/kappa-conotoxin-like pl14.2 (68 aa).

The signal sequence occupies residues 1–27 (MPSVRSVTCCCLLWMMFSVQLVTPGSP). Positions 28–39 (ATAQLSGQRTAR) are excised as a propeptide. 2 disulfide bridges follow: Cys46–Cys61 and Cys50–Cys63. Arg64 carries the arginine amide modification. A propeptide spanning residues 65-68 (GKRD) is cleaved from the precursor.

The protein belongs to the conotoxin J superfamily. In terms of tissue distribution, expressed by the venom duct.

The protein resides in the secreted. In terms of biological role, highly inhibits both nicotinic acetylcholine receptors (neuronal (alpha-3/beta-4) and muscular (alpha-1/beta-1/epsilon/delta) subtypes) and the voltage-gated potassium channel Kv1.6/KCNA6 subtype. This chain is Alpha/kappa-conotoxin-like pl14.2, found in Conus planorbis (Planorbis cone).